A 279-amino-acid chain; its full sequence is uncharacterized protein (279 aa).

Positions 14-71 (ITPNQIKLLIALHKTKSQNEAAKLLNIKPSSFNIQLKRLENKLGVKLYYSSPNGTVLT) constitute an HTH lysR-type domain. Residues 31 to 50 (QNEAAKLLNIKPSSFNIQLK) constitute a DNA-binding region (H-T-H motif).

Belongs to the LysR transcriptional regulatory family.

This is an uncharacterized protein from Methanocaldococcus jannaschii (strain ATCC 43067 / DSM 2661 / JAL-1 / JCM 10045 / NBRC 100440) (Methanococcus jannaschii).